The sequence spans 129 residues: D-ribose pyranase 2 (129 aa).

His20 (proton donor) is an active-site residue. Substrate contacts are provided by residues Asp28, His96, and 118-120; that span reads YAN.

This sequence belongs to the RbsD / FucU family. RbsD subfamily. As to quaternary structure, homodecamer.

Its subcellular location is the cytoplasm. It catalyses the reaction beta-D-ribopyranose = beta-D-ribofuranose. Its pathway is carbohydrate metabolism; D-ribose degradation; D-ribose 5-phosphate from beta-D-ribopyranose: step 1/2. Catalyzes the interconversion of beta-pyran and beta-furan forms of D-ribose. This Streptomyces griseus subsp. griseus (strain JCM 4626 / CBS 651.72 / NBRC 13350 / KCC S-0626 / ISP 5235) protein is D-ribose pyranase 2.